Consider the following 464-residue polypeptide: DNA primase DnaG (464 aa).

In terms of domain architecture, Toprim spans 200–274; it reads DSIIVVEGRA…DVDYVARAPE (75 aa). Residues E206, D248, and D250 each contribute to the Mg(2+) site. Over residues 322 to 332 the composition is skewed to basic and acidic residues; the sequence is NGREEKVREVK. A disordered region spans residues 322–359; sequence NGREEKVREVKPPAPAPAPAPAPKPIEKPEPKEREEKI. The segment covering 333–345 has biased composition (pro residues); sequence PPAPAPAPAPAPK. The segment covering 346–359 has biased composition (basic and acidic residues); that stretch reads PIEKPEPKEREEKI.

The protein belongs to the archaeal DnaG primase family. Forms a ternary complex with MCM helicase and DNA. Component of the archaeal exosome complex. The cofactor is Mg(2+).

The catalysed reaction is ssDNA + n NTP = ssDNA/pppN(pN)n-1 hybrid + (n-1) diphosphate.. In terms of biological role, RNA polymerase that catalyzes the synthesis of short RNA molecules used as primers for DNA polymerase during DNA replication. Also part of the exosome, which is a complex involved in RNA degradation. Acts as a poly(A)-binding protein that enhances the interaction between heteromeric, adenine-rich transcripts and the exosome. This Thermococcus onnurineus (strain NA1) protein is DNA primase DnaG.